Here is a 490-residue protein sequence, read N- to C-terminus: Betaine aldehyde dehydrogenase (490 aa).

Residues Ile27 and Asp93 each coordinate K(+). NAD(+) is bound at residue Gly150–Trp152. Catalysis depends on Lys162, which acts as the Charge relay system. NAD(+) is bound at residue Lys176–Glu179. Val180 provides a ligand contact to K(+). Position 230 to 233 (Gly230 to Thr233) interacts with NAD(+). Leu246 is a K(+) binding site. The Proton acceptor role is filled by Glu252. Gly254, Cys286, and Glu387 together coordinate NAD(+). The active-site Nucleophile is Cys286. A Cysteine sulfenic acid (-SOH) modification is found at Cys286. Lys457 and Gly460 together coordinate K(+). Glu464 acts as the Charge relay system in catalysis.

Belongs to the aldehyde dehydrogenase family. In terms of assembly, dimer of dimers. K(+) serves as cofactor.

The enzyme catalyses betaine aldehyde + NAD(+) + H2O = glycine betaine + NADH + 2 H(+). The protein operates within amine and polyamine biosynthesis; betaine biosynthesis via choline pathway; betaine from betaine aldehyde: step 1/1. Functionally, involved in the biosynthesis of the osmoprotectant glycine betaine. Catalyzes the irreversible oxidation of betaine aldehyde to the corresponding acid. This chain is Betaine aldehyde dehydrogenase, found in Pseudomonas putida (strain GB-1).